Here is a 1199-residue protein sequence, read N- to C-terminus: MLDVNNFEYMNIGLASPDKIRSWSFGEVKKPETINYRTLKPEKDGLFCERIFGPQKDWECHCGKYKRVRYKGVVCDRCGVEVTRAKVRRERMGHIELAAPVSHIWYFKGIPSRMGLVLDMSPRALEEVIYFASYVVTDPGNTPLEKKQLLSEKEFRAYLDKYGNTFSAAMGAEAINKLLQDIDLVKEVDTLKEELKTAQGQRRTRAIKRLEVLEAFRNSGNKPSWMILDVLPVIPPELRPMVQLDGGRFATSDLNDLYRRVINRNNRLKRLLDLGAPSIIVQNEKRMLQEAVDALIDNGRRGRPVTGPGNRPLKSLSHMLKGKQGRFRQNLLGKRVDYSGRSVIVVGPHLKMYQCGLPKEMALELFKPFVMKELVEKGLAHNIKSAKRKIERVQPEVWDVLESVIREHPVLLNRAPTLHRLGIQAFEPTLVEGRAIRLHPLVCTAYNADFDGDQMAVHVPLSAEAQAEARILMLAAQNILNPKDGKPVVTPSQDMVLGNYYLTLERKGAIGEGMVFKDTNEALLAYQNGYVHLHTRVAVAANSLKNVTFTDEQRSKLLITTVGKLIFNEILPESFPYMNEPTKSNIEEKTPDRFFLEKGEDVKATIEKQEINAPFKKGILGKIIAEIFKRFHITETSKMLDRMKNLGFKYSTKAGITVGVSDIVVLDDKQKILEEAQAKVDNVMKQFRRGLITEEERYERVISIWSSSKDVIQGKLMKSLDEVNPIYMMSDSGARGNASNFTQLAGMRGLMANPAGRIIELPIKSSFREGLTVLEYFISTHGARKGLADTALKTADSGYLTRRLVDVAQDVIIRETDCGTDRGILAKSIREGNEIIEKLEERLIGRFARKPIVHPETGEVIVGENELIDEDKALEVVEAGIEEVWIRSAFTCNTPHGVCKRCYGRNLATGTDVEVGEAVGIIAAQSIGEPGTQLTMRTFHTGGVAGDDITQGLPRIQELFEARNPKGQATISEIDGVVAEINDVRDKQQEIVVQGDVETRSYTAPYNARLKVVEGDKVTRGQVLTEGSIDPKELLKVTDMTAVQEYLLHEVQKVYRMQGVEIGDKHVEVMVRQMLRKVRVADAGDTDVLPGTLLDVHQFTEANKKVLFEGKRPATGRPVLLGITKASLETDSFLSAASFQETTRVLTDAAIKGKRDELLGLKENVIIGKLVPAGTGMPNYRKVKPVSQVQPSDDMVPVE.

Zn(2+) is bound by residues cysteine 60, cysteine 62, cysteine 75, and cysteine 78. Residues aspartate 449, aspartate 451, and aspartate 453 each contribute to the Mg(2+) site. Zn(2+) contacts are provided by cysteine 818, cysteine 892, cysteine 899, and cysteine 902.

Belongs to the RNA polymerase beta' chain family. In terms of assembly, the RNAP catalytic core consists of 2 alpha, 1 beta, 1 beta' and 1 omega subunit. When a sigma factor is associated with the core the holoenzyme is formed, which can initiate transcription. It depends on Mg(2+) as a cofactor. The cofactor is Zn(2+).

The enzyme catalyses RNA(n) + a ribonucleoside 5'-triphosphate = RNA(n+1) + diphosphate. In terms of biological role, DNA-dependent RNA polymerase catalyzes the transcription of DNA into RNA using the four ribonucleoside triphosphates as substrates. The sequence is that of DNA-directed RNA polymerase subunit beta' from Bacillus pumilus (strain SAFR-032).